A 120-amino-acid chain; its full sequence is Protein EPIDERMAL PATTERNING FACTOR 2 (120 aa).

Positions 1 to 25 (MTKFVRKYMFCLVLVFAACSLVVNS) are cleaved as a signal peptide. 4 disulfides stabilise this stretch: C76–C107, C80–C86, C83–C109, and C95–C101.

It belongs to the plant cysteine rich small secretory peptide family. Epidermal patterning factor subfamily. As to quaternary structure, interacts with ERECTA, ERL1 and TMM. In terms of tissue distribution, expressed in leaves, especially by the MMCs and their early descendants cells (stomatal lineage cells) including guard mother cells (GMCs).

The protein resides in the secreted. Its function is as follows. Controls stomatal patterning. Regulates the number of cells that enter, and remain in, the stomatal lineage by inhibiting protodermal cells from adopting the meristemoid mother cell (MMC) fate in a non-cell-autonomous manner. Mediates stomatal development inhibition. MEPF2: mobile signal controlling stomatal development in a non-cell-autonomous manner. Uses ERECTA as major receptor. Inactivated by cleavage by CRSP (AC Q9LNU1). May act by competing with somatogen (AC Q9SV72) for the same receptor, TMM (AC Q9SSD1). This Arabidopsis thaliana (Mouse-ear cress) protein is Protein EPIDERMAL PATTERNING FACTOR 2.